The primary structure comprises 48 residues: Small, acid-soluble spore protein O (48 aa).

The interval 1 to 23 is disordered; that stretch reads MTKRKANHVINGMNAAKSQGNGA.

It belongs to the SspO family.

The protein resides in the spore core. This is Small, acid-soluble spore protein O from Bacillus pumilus (strain SAFR-032).